The following is a 463-amino-acid chain: T-box transcription factor TBX1-B (463 aa).

Disordered regions lie at residues 39–58 (SPSP…PCSA) and 75–102 (GASS…APVK). The span at 75 to 96 (GASSSSCASSTPGSGSTGSSSG) shows a compositional bias: low complexity. A DNA-binding region (T-box) is located at residues 119–297 (LWDEFNQLGT…SNPFAKGFRD (179 aa)). Disordered stretches follow at residues 320-343 (RSRN…RREY) and 367-406 (SPSL…HHHP). The span at 323-332 (NPVSSPPQNG) shows a compositional bias: polar residues. Residues 333 to 343 (SDKDGDGRREY) are compositionally biased toward basic and acidic residues. Over residues 367–380 (SPSLPVPGGLVPLS) the composition is skewed to low complexity. Positions 420–431 (KTRPAPYPLPSI) match the Nuclear localization signal motif.

In terms of assembly, binds DNA as a dimer. Interacts with dscr6/ripply3.

It localises to the nucleus. Functionally, probable transcriptional regulator involved in developmental processes. Binds to the palindromic T site 5'-TTCACACCTAGGTGTGAA-3' DNA sequence. Induces pre-placodal ectoderm (PPE) gene expression in regions where RIPPLY3 is absent. Plays a role in the formation of the anteroposterior (AP) axis during embryonic development; required to establish the posterolateral border of the pre-placodal ectoderm (PPE) acting downstream of the retinoic acid receptor (RAR) signaling. Probable transcriptional regulator involved in developmental processes. Binds to the palindromic T site 5'-TTCACACCTAGGTGTGAA-3' DNA sequence. Is required for normal development of the pharyngeal arch arteries. The polypeptide is T-box transcription factor TBX1-B (tbx1-b) (Xenopus laevis (African clawed frog)).